The chain runs to 270 residues: Orotidine 5'-phosphate decarboxylase (270 aa).

The Proton donor role is filled by Lys-89.

The protein belongs to the OMP decarboxylase family. Type 2 subfamily.

The enzyme catalyses orotidine 5'-phosphate + H(+) = UMP + CO2. It functions in the pathway pyrimidine metabolism; UMP biosynthesis via de novo pathway; UMP from orotate: step 2/2. The protein is Orotidine 5'-phosphate decarboxylase of Dehalococcoides mccartyi (strain ATCC BAA-2100 / JCM 16839 / KCTC 5957 / BAV1).